A 621-amino-acid polypeptide reads, in one-letter code: MAU2 chromatid cohesion factor homolog (621 aa).

TPR repeat units follow at residues 96-129 (FDTASLLAQLHLQTEQSSHAKAMLRRAVELSQNN), 451-484 (GGFYYVQGLHAFHKNSFHEAKRFLRETLKMANAE), and 491-524 (SCSLVLLSHVFLSIGNSKESMNMVTPAMQLASKI).

This sequence belongs to the SCC4/mau-2 family. Interacts with Nipped-B to form the cohesin loading complex.

The protein localises to the nucleus. It is found in the nucleoplasm. Its function is as follows. Required for association of the cohesin complex with chromatin during interphase. Plays a role in sister chromatid cohesion and normal progression through prometaphase. This Drosophila virilis (Fruit fly) protein is MAU2 chromatid cohesion factor homolog.